Consider the following 874-residue polypeptide: Leucine--tRNA ligase (874 aa).

Positions 47–57 (PYPSGKLHMGH) match the 'HIGH' region motif. The 'KMSKS' region signature appears at 636-640 (KMSKS). K639 is an ATP binding site.

This sequence belongs to the class-I aminoacyl-tRNA synthetase family.

The protein localises to the cytoplasm. The enzyme catalyses tRNA(Leu) + L-leucine + ATP = L-leucyl-tRNA(Leu) + AMP + diphosphate. This chain is Leucine--tRNA ligase, found in Acinetobacter baumannii (strain AB307-0294).